Reading from the N-terminus, the 254-residue chain is 5-oxoprolinase subunit A (254 aa).

Belongs to the LamB/PxpA family. Forms a complex composed of PxpA, PxpB and PxpC.

It carries out the reaction 5-oxo-L-proline + ATP + 2 H2O = L-glutamate + ADP + phosphate + H(+). Catalyzes the cleavage of 5-oxoproline to form L-glutamate coupled to the hydrolysis of ATP to ADP and inorganic phosphate. In Bacillus mycoides (strain KBAB4) (Bacillus weihenstephanensis), this protein is 5-oxoprolinase subunit A.